The chain runs to 88 residues: Small ribosomal subunit protein bS20 (88 aa).

2 disordered regions span residues 1–23 (MANT…VNKA) and 65–88 (GVMH…SLSA).

The protein belongs to the bacterial ribosomal protein bS20 family.

Its function is as follows. Binds directly to 16S ribosomal RNA. The chain is Small ribosomal subunit protein bS20 from Rhizobium meliloti (strain 1021) (Ensifer meliloti).